The sequence spans 198 residues: Nucleoid occlusion factor SlmA (198 aa).

One can recognise an HTH tetR-type domain in the interval 10 to 70; the sequence is NRREEILQSL…SLIEFIEDSL (61 aa). Residues 33–52 constitute a DNA-binding region (H-T-H motif); the sequence is TTAKLAASVGVSEAALYRHF. The stretch at 117–144 forms a coiled coil; the sequence is EQDRLQGRINQLFERIEAQLRQVLREKR.

The protein belongs to the nucleoid occlusion factor SlmA family. Homodimer. Interacts with FtsZ.

The protein localises to the cytoplasm. The protein resides in the nucleoid. In terms of biological role, required for nucleoid occlusion (NO) phenomenon, which prevents Z-ring formation and cell division over the nucleoid. Acts as a DNA-associated cell division inhibitor that binds simultaneously chromosomal DNA and FtsZ, and disrupts the assembly of FtsZ polymers. SlmA-DNA-binding sequences (SBS) are dispersed on non-Ter regions of the chromosome, preventing FtsZ polymerization at these regions. The protein is Nucleoid occlusion factor SlmA of Salmonella paratyphi A (strain ATCC 9150 / SARB42).